Consider the following 152-residue polypeptide: Regulatory protein RecX (152 aa).

It belongs to the RecX family.

It localises to the cytoplasm. Functionally, modulates RecA activity. The protein is Regulatory protein RecX of Haemophilus influenzae (strain PittGG).